The following is a 170-amino-acid chain: Adenine phosphoribosyltransferase (170 aa).

Belongs to the purine/pyrimidine phosphoribosyltransferase family. Homodimer.

The protein localises to the cytoplasm. It carries out the reaction AMP + diphosphate = 5-phospho-alpha-D-ribose 1-diphosphate + adenine. It functions in the pathway purine metabolism; AMP biosynthesis via salvage pathway; AMP from adenine: step 1/1. Catalyzes a salvage reaction resulting in the formation of AMP, that is energically less costly than de novo synthesis. In Bacillus anthracis (strain A0248), this protein is Adenine phosphoribosyltransferase.